Here is an 810-residue protein sequence, read N- to C-terminus: Transmembrane GTPase Marf (810 aa).

Over 1 to 637 the chain is Cytoplasmic; the sequence is MAAYLNRTIS…TTTPVEATPV (637 aa). A Phosphothreonine modification is found at Thr-8. Residues 13–40 form a disordered region; it reads TGQTGPADDDRHASSTDTVDKSGPGSPL. The span at 20–32 shows a compositional bias: basic and acidic residues; it reads DDDRHASSTDTVD. A Phosphoserine modification is found at Ser-38. The 249-residue stretch at 134–382 folds into the Dynamin-type G domain; the sequence is QRDHMKVAFF…IRYFEFQDFE (249 aa). The G1 motif stretch occupies residues 144–151; sequence GRTSNGKS. GTP is bound at residue 147 to 152; the sequence is SNGKSS. The G2 motif stretch occupies residues 170–171; the sequence is TT. Positions 239–242 are G3 motif; the sequence is DSPG. 298 to 301 contributes to the GTP binding site; the sequence is NRWD. Residues 298–301 form a G4 motif region; it reads NRWD. A region of interest (G5 motif) is located at residue Lys-327. Ser-345 serves as a coordination point for GTP. Positions 427-476 form a coiled coil; sequence RNLKQDQKNLLTERIQGTETQMMQVTREMKMKIHNMVEEVEEKVSKALNE. At Thr-553 the chain carries Phosphothreonine. Ser-554 bears the Phosphoserine mark. Thr-555 is modified (phosphothreonine). The disordered stretch occupies residues 609–630; sequence GQPALVNRQSSIGHSVSTPTTT. Residues 638-648 form a helical membrane-spanning segment; it reads CLLPAPVVAGI. The Mitochondrial intermembrane portion of the chain corresponds to 649 to 668; it reads TPEQLSLISRFAVSSIGSQG. A helical transmembrane segment spans residues 669–689; sequence TVGGLVVAGVMLKTIGWRVLV. At 690 to 810 the chain is on the cytoplasmic side; sequence GVGALYGCIY…IFEHNYISPQ (121 aa). A coiled-coil region spans residues 759-806; the sequence is TATTDMNDELKTLDSQLNILEANQKQLKLLRNKANYIQNELDIFEHNY.

Belongs to the TRAFAC class dynamin-like GTPase superfamily. Dynamin/Fzo/YdjA family. Mitofusin subfamily. Interacts with Mul1. In terms of processing, ubiquitinated by park and Mul1. Ubiquitinated, probably by HUWE1, when dietary stearate (C18:0) levels are low; ubiquitination inhibits mitochondrial fusion. In terms of tissue distribution, widely expressed in embryos, accumulating in the mesoderm and endoderm during gut development. In the male germ line, it is expressed in spermatogonia, spermatocytes and early spermatids.

It is found in the mitochondrion outer membrane. It carries out the reaction GTP + H2O = GDP + phosphate + H(+). In terms of biological role, mitochondrial outer membrane GTPase that mediates mitochondrial clustering and fusion. Mitochondrial fusion is the physical merging of mitochondria that gives rise to mitochondrial networks, and this process is counterbalanced by mitochondrial fission which fragments networks. Promotes, but is not required for park recruitment to dysfunctional mitochondria. The protein is Transmembrane GTPase Marf (Marf) of Drosophila melanogaster (Fruit fly).